The chain runs to 426 residues: Glutamate-1-semialdehyde 2,1-aminomutase (426 aa).

Lys-265 bears the N6-(pyridoxal phosphate)lysine mark.

This sequence belongs to the class-III pyridoxal-phosphate-dependent aminotransferase family. HemL subfamily. As to quaternary structure, homodimer. It depends on pyridoxal 5'-phosphate as a cofactor.

The protein localises to the cytoplasm. The catalysed reaction is (S)-4-amino-5-oxopentanoate = 5-aminolevulinate. Its pathway is porphyrin-containing compound metabolism; protoporphyrin-IX biosynthesis; 5-aminolevulinate from L-glutamyl-tRNA(Glu): step 2/2. The polypeptide is Glutamate-1-semialdehyde 2,1-aminomutase (Escherichia coli O7:K1 (strain IAI39 / ExPEC)).